The primary structure comprises 184 residues: Isopentenyl-diphosphate Delta-isomerase (184 aa).

Positions 25 and 32 each coordinate Mn(2+). The Nudix hydrolase domain maps to P30 to L164. C67 is an active-site residue. A Mn(2+)-binding site is contributed by H69. E87 lines the Mg(2+) pocket. 2 residues coordinate Mn(2+): E114 and E116. E116 is an active-site residue.

The protein belongs to the IPP isomerase type 1 family. Homodimer. Requires Mg(2+) as cofactor. Mn(2+) serves as cofactor.

The protein resides in the cytoplasm. The enzyme catalyses isopentenyl diphosphate = dimethylallyl diphosphate. Its pathway is isoprenoid biosynthesis; dimethylallyl diphosphate biosynthesis; dimethylallyl diphosphate from isopentenyl diphosphate: step 1/1. Functionally, catalyzes the 1,3-allylic rearrangement of the homoallylic substrate isopentenyl (IPP) to its highly electrophilic allylic isomer, dimethylallyl diphosphate (DMAPP). The protein is Isopentenyl-diphosphate Delta-isomerase of Klebsiella pneumoniae (strain 342).